The chain runs to 362 residues: GDSL esterase/lipase At5g22810 (362 aa).

The first 28 residues, methionine 1 to valine 28, serve as a signal peptide directing secretion. Serine 44 serves as the catalytic Nucleophile. 4 N-linked (GlcNAc...) asparagine glycosylation sites follow: asparagine 159, asparagine 162, asparagine 264, and asparagine 329. Active-site residues include aspartate 337 and histidine 340.

The protein belongs to the 'GDSL' lipolytic enzyme family.

It is found in the secreted. The sequence is that of GDSL esterase/lipase At5g22810 from Arabidopsis thaliana (Mouse-ear cress).